The chain runs to 309 residues: MKQKLLVIGGPTAVGKTDLSIKLAKNLNGEIISADSMQIYKYMDIGSAKVTKDEMNGIKHYLIDAIEPDTPFSVADFKQLGEEALEKIICNGKFPIISGGTGLYINSLTCNMTFTEAEKDESYREYLETLALEKGNEYIHEMLKDVDPISYKEIHANNRKRVIRALEVFKLTNKPFSSYNVGLDFYNSEYDVYYYVLTMNREKLYDRINKRVDLMMEKGLLNECIRLKEMGYNSDIQSMQGIGYKEILYYLEGKITLEKAIDMIKQGSRNYAKRQLTWFRRDKRCIFLDKDIMSDDEILDKVINDIIKN.

ATP is bound at residue 10-17 (GPTAVGKT). 12-17 (TAVGKT) is a substrate binding site. The tract at residues 35 to 38 (DSMQ) is interaction with substrate tRNA.

The protein belongs to the IPP transferase family. In terms of assembly, monomer. It depends on Mg(2+) as a cofactor.

It carries out the reaction adenosine(37) in tRNA + dimethylallyl diphosphate = N(6)-dimethylallyladenosine(37) in tRNA + diphosphate. Its function is as follows. Catalyzes the transfer of a dimethylallyl group onto the adenine at position 37 in tRNAs that read codons beginning with uridine, leading to the formation of N6-(dimethylallyl)adenosine (i(6)A). The sequence is that of tRNA dimethylallyltransferase from Clostridium beijerinckii (strain ATCC 51743 / NCIMB 8052) (Clostridium acetobutylicum).